The primary structure comprises 243 residues: NifU-like scaffold protein (243 aa).

The protein belongs to the NifU family. Homodimer.

The protein localises to the plastid. It is found in the apicoplast. The protein operates within cofactor biosynthesis; iron-sulfur cluster biosynthesis. In terms of biological role, binds and transfers [4Fe-4S] iron-sulfur clusters to target proteins. The protein is NifU-like scaffold protein of Plasmodium berghei (strain Anka).